The chain runs to 31 residues: Cytochrome b6-f complex subunit 6 (31 aa).

Residues 4-24 (IISYFLFLIGALTLALVLFIG) traverse the membrane as a helical segment.

Belongs to the PetL family. The 4 large subunits of the cytochrome b6-f complex are cytochrome b6, subunit IV (17 kDa polypeptide, PetD), cytochrome f and the Rieske protein, while the 4 small subunits are PetG, PetL, PetM and PetN. The complex functions as a dimer.

It is found in the plastid. It localises to the chloroplast thylakoid membrane. Functionally, component of the cytochrome b6-f complex, which mediates electron transfer between photosystem II (PSII) and photosystem I (PSI), cyclic electron flow around PSI, and state transitions. PetL is important for photoautotrophic growth as well as for electron transfer efficiency and stability of the cytochrome b6-f complex. The protein is Cytochrome b6-f complex subunit 6 of Marchantia polymorpha (Common liverwort).